A 414-amino-acid chain; its full sequence is Multifunctional CCA protein (414 aa).

The ATP site is built by Gly-8 and Arg-11. Positions 8 and 11 each coordinate CTP. Mg(2+) is bound by residues Asp-21 and Asp-23. 3 residues coordinate ATP: Arg-91, Arg-137, and Arg-140. CTP contacts are provided by Arg-91, Arg-137, and Arg-140. The HD domain maps to 228–329; that stretch reads TGIHTLMTLA…LKLFDAVDVW (102 aa).

Belongs to the tRNA nucleotidyltransferase/poly(A) polymerase family. Bacterial CCA-adding enzyme type 1 subfamily. As to quaternary structure, monomer. Can also form homodimers and oligomers. The cofactor is Mg(2+). It depends on Ni(2+) as a cofactor.

It catalyses the reaction a tRNA precursor + 2 CTP + ATP = a tRNA with a 3' CCA end + 3 diphosphate. It carries out the reaction a tRNA with a 3' CCA end + 2 CTP + ATP = a tRNA with a 3' CCACCA end + 3 diphosphate. Its function is as follows. Catalyzes the addition and repair of the essential 3'-terminal CCA sequence in tRNAs without using a nucleic acid template. Adds these three nucleotides in the order of C, C, and A to the tRNA nucleotide-73, using CTP and ATP as substrates and producing inorganic pyrophosphate. tRNA 3'-terminal CCA addition is required both for tRNA processing and repair. Also involved in tRNA surveillance by mediating tandem CCA addition to generate a CCACCA at the 3' terminus of unstable tRNAs. While stable tRNAs receive only 3'-terminal CCA, unstable tRNAs are marked with CCACCA and rapidly degraded. This is Multifunctional CCA protein from Serratia proteamaculans (strain 568).